We begin with the raw amino-acid sequence, 343 residues long: Putative kinase HI_0665 (343 aa).

Aspartate 209 functions as the Proton acceptor in the catalytic mechanism.

Belongs to the HipA Ser/Thr kinase family.

This chain is Putative kinase HI_0665, found in Haemophilus influenzae (strain ATCC 51907 / DSM 11121 / KW20 / Rd).